We begin with the raw amino-acid sequence, 141 residues long: Large ribosomal subunit protein uL11 (141 aa).

The protein belongs to the universal ribosomal protein uL11 family. Part of the ribosomal stalk of the 50S ribosomal subunit. Interacts with L10 and the large rRNA to form the base of the stalk. L10 forms an elongated spine to which L12 dimers bind in a sequential fashion forming a multimeric L10(L12)X complex. In terms of processing, one or more lysine residues are methylated.

Forms part of the ribosomal stalk which helps the ribosome interact with GTP-bound translation factors. The sequence is that of Large ribosomal subunit protein uL11 from Trichodesmium erythraeum (strain IMS101).